Consider the following 329-residue polypeptide: Haptoglobin (329 aa).

N-linked (GlcNAc...) asparagine glycosylation is present at Asn-9. One can recognise a Sushi domain in the interval 13-70; that stretch reads VSLPKPPVIENGYVEHMIRYQCKPFYKLHTEGDGVYTLNSEKHWTNKAVGEKLPECEA. Cystine bridges form between Cys-34–Cys-68 and Cys-72–Cys-189. Arg-84 is a propeptide. The region spanning 85-327 is the Peptidase S1 domain; it reads IMGGSVDAKG…VLAWVQETIA (243 aa). N-linked (GlcNAc...) asparagine glycosylation is found at Asn-107 and Asn-214. Cystine bridges form between Cys-232/Cys-263 and Cys-274/Cys-304. The interaction with CD163 stretch occupies residues 241–246; the sequence is VPEKKS.

It belongs to the peptidase S1 family. As to quaternary structure, tetramer of two alpha and two beta chains; disulfide-linked. The hemoglobin/haptoglobin complex is composed of a haptoglobin dimer bound to two hemoglobin alpha-beta dimers. Interacts with CD163. Interacts with ERGIC3. Expressed by the liver and secreted in plasma.

The protein resides in the secreted. Its subcellular location is the extracellular space. Its function is as follows. As a result of hemolysis, hemoglobin is found to accumulate in the kidney and is secreted in the urine. Haptoglobin captures, and combines with free plasma hemoglobin to allow hepatic recycling of heme iron and to prevent kidney damage. Haptoglobin also acts as an antioxidant, has antibacterial activity and plays a role in modulating many aspects of the acute phase response. Hemoglobin/haptoglobin complexes are rapidly cleared by the macrophage CD163 scavenger receptor expressed on the surface of liver Kupfer cells through an endocytic lysosomal degradation pathway. This chain is Haptoglobin (HP), found in Canis lupus familiaris (Dog).